The primary structure comprises 115 residues: NADH-ubiquinone oxidoreductase chain 3 (115 aa).

Transmembrane regions (helical) follow at residues 3–23 (LMLTLLTNTLLASLLVLIAFW), 55–75 (FFLVAITFLLFDLEIALLLPL), and 84–104 (LNTMLIMALVLISLLAISLAY).

The protein belongs to the complex I subunit 3 family. In terms of assembly, core subunit of respiratory chain NADH dehydrogenase (Complex I) which is composed of 45 different subunits. Interacts with TMEM186. Interacts with TMEM242.

It is found in the mitochondrion inner membrane. The enzyme catalyses a ubiquinone + NADH + 5 H(+)(in) = a ubiquinol + NAD(+) + 4 H(+)(out). Functionally, core subunit of the mitochondrial membrane respiratory chain NADH dehydrogenase (Complex I) which catalyzes electron transfer from NADH through the respiratory chain, using ubiquinone as an electron acceptor. Essential for the catalytic activity of complex I. This Equus caballus (Horse) protein is NADH-ubiquinone oxidoreductase chain 3.